A 278-amino-acid chain; its full sequence is Putative pyruvate, phosphate dikinase regulatory protein (278 aa).

149–156 contributes to the ADP binding site; that stretch reads GVSRSSKT.

The protein belongs to the pyruvate, phosphate/water dikinase regulatory protein family. PDRP subfamily.

It carries out the reaction N(tele)-phospho-L-histidyl/L-threonyl-[pyruvate, phosphate dikinase] + ADP = N(tele)-phospho-L-histidyl/O-phospho-L-threonyl-[pyruvate, phosphate dikinase] + AMP + H(+). The enzyme catalyses N(tele)-phospho-L-histidyl/O-phospho-L-threonyl-[pyruvate, phosphate dikinase] + phosphate + H(+) = N(tele)-phospho-L-histidyl/L-threonyl-[pyruvate, phosphate dikinase] + diphosphate. Bifunctional serine/threonine kinase and phosphorylase involved in the regulation of the pyruvate, phosphate dikinase (PPDK) by catalyzing its phosphorylation/dephosphorylation. The chain is Putative pyruvate, phosphate dikinase regulatory protein from Erythrobacter litoralis (strain HTCC2594).